Consider the following 203-residue polypeptide: Guanylate kinase (203 aa).

The 179-residue stretch at 5–183 folds into the Guanylate kinase-like domain; that stretch reads GVLYIISAPS…AVEELKSVVV (179 aa). 12–19 is an ATP binding site; that stretch reads APSGAGKT.

Belongs to the guanylate kinase family.

Its subcellular location is the cytoplasm. It carries out the reaction GMP + ATP = GDP + ADP. Its function is as follows. Essential for recycling GMP and indirectly, cGMP. This chain is Guanylate kinase, found in Geobacter metallireducens (strain ATCC 53774 / DSM 7210 / GS-15).